A 161-amino-acid chain; its full sequence is N5-carboxyaminoimidazole ribonucleotide mutase (161 aa).

Residues serine 9, aspartate 12, and arginine 39 each coordinate substrate.

Belongs to the AIR carboxylase family. Class I subfamily.

It carries out the reaction 5-carboxyamino-1-(5-phospho-D-ribosyl)imidazole + H(+) = 5-amino-1-(5-phospho-D-ribosyl)imidazole-4-carboxylate. It participates in purine metabolism; IMP biosynthesis via de novo pathway; 5-amino-1-(5-phospho-D-ribosyl)imidazole-4-carboxylate from 5-amino-1-(5-phospho-D-ribosyl)imidazole (N5-CAIR route): step 2/2. Catalyzes the conversion of N5-carboxyaminoimidazole ribonucleotide (N5-CAIR) to 4-carboxy-5-aminoimidazole ribonucleotide (CAIR). This Vibrio parahaemolyticus serotype O3:K6 (strain RIMD 2210633) protein is N5-carboxyaminoimidazole ribonucleotide mutase.